A 97-amino-acid polypeptide reads, in one-letter code: YcgL domain-containing protein PFLU_1517 (97 aa).

Residues 3 to 87 (RICSIYRSKK…AEDEYIEHLP (85 aa)) enclose the YcgL domain.

This is YcgL domain-containing protein PFLU_1517 from Pseudomonas fluorescens (strain SBW25).